Reading from the N-terminus, the 204-residue chain is MQNPLPEVMSPEHDKRTTTPMSKEANKFIRELDKKPGDLAVVSDFVKRNTGKRLPIGKRSNLYVRICDLSGTIYMGETFILESWEELYLPEPTKMEVLGTLESCCGIPPFPEWIVMVGEDQCVYAYGDEEILLFAYSVKQLVEEGIQETGISYKYPDDISDVDEEVLQQDEEIQKIRKKTREFVDKDAQEFQDFLNSLDASLLS.

Residues 1–20 (MQNPLPEVMSPEHDKRTTTP) form a disordered region.

This is an uncharacterized protein from Frog virus 3 (isolate Goorha) (FV-3).